A 97-amino-acid polypeptide reads, in one-letter code: Co-chaperonin GroES (97 aa).

Belongs to the GroES chaperonin family. As to quaternary structure, heptamer of 7 subunits arranged in a ring. Interacts with the chaperonin GroEL.

It localises to the cytoplasm. In terms of biological role, together with the chaperonin GroEL, plays an essential role in assisting protein folding. The GroEL-GroES system forms a nano-cage that allows encapsulation of the non-native substrate proteins and provides a physical environment optimized to promote and accelerate protein folding. GroES binds to the apical surface of the GroEL ring, thereby capping the opening of the GroEL channel. This chain is Co-chaperonin GroES, found in Elusimicrobium minutum (strain Pei191).